The primary structure comprises 106 residues: NADH-quinone oxidoreductase subunit K (106 aa).

3 helical membrane-spanning segments follow: residues 10 to 30 (IHYYLILAMIIFTIGVAGVMV), 35 to 55 (VLIFMSVELILNSVNLVFVTF), and 67 to 87 (VVFFVMAIAAAEAAIGLAIVI).

This sequence belongs to the complex I subunit 4L family. As to quaternary structure, NDH-1 is composed of 14 different subunits. Subunits NuoA, H, J, K, L, M, N constitute the membrane sector of the complex.

It is found in the cell inner membrane. It carries out the reaction a quinone + NADH + 5 H(+)(in) = a quinol + NAD(+) + 4 H(+)(out). In terms of biological role, NDH-1 shuttles electrons from NADH, via FMN and iron-sulfur (Fe-S) centers, to quinones in the respiratory chain. The immediate electron acceptor for the enzyme in this species is believed to be ubiquinone. Couples the redox reaction to proton translocation (for every two electrons transferred, four hydrogen ions are translocated across the cytoplasmic membrane), and thus conserves the redox energy in a proton gradient. This Leptospira interrogans serogroup Icterohaemorrhagiae serovar copenhageni (strain Fiocruz L1-130) protein is NADH-quinone oxidoreductase subunit K.